The primary structure comprises 1017 residues: Centriole and centriolar satellite protein OFD1 (1017 aa).

The 33-residue stretch at 69–101 (LIGASNSLVADHLQRCGYEYSLSVFFPESGLAK) folds into the LisH domain. 2 coiled-coil regions span residues 188-557 (PHRS…ENEV) and 626-659 (EFIA…RATQ). The interval 609–666 (PPYVNTATEASSPESDFEFIASSTKAKVRELEQEAERLEKAFRTYYQRATQNPSTSPQ) is mediates homooligomerization. Disordered regions lie at residues 657–676 (ATQN…SVNS), 685–705 (SSSM…QPLG), 721–749 (GSVV…RSLD), and 769–801 (LDRV…SFSG). A phosphoserine mark is found at serine 664, serine 670, serine 687, serine 722, serine 737, serine 747, serine 791, and serine 823. Positions 722-740 (SVVSRPRRTSSSTRLSSTP) are enriched in low complexity. Residues 895–966 (ELHMKERRQR…AHCENTLEKY (72 aa)) adopt a coiled-coil conformation. Residues 897–988 (HMKERRQREE…ADKSSKKSGK (92 aa)) are compositionally biased toward basic and acidic residues. The disordered stretch occupies residues 897-1017 (HMKERRQREE…FSHEEPDDMW (121 aa)).

Belongs to the OFD1 family. As to quaternary structure, homooligomer. Interacts with LCA5. Interacts with RUVBL1; the interaction is direct and may mediate interaction with the NuA4 histone acetyltransferase complex. Interacts with SDCCAG8; the interaction is direct. Interacts with MAP1LC3B. Interacts with C2CD3; OFD1 may act as a negative regulator of C2CD3. Forms a complex with KIAA0753/OFIP and CEP20/FOR20; the interaction with CEP20 is detected only in the presence of KIAA0753. Interacts with PCM1; this interaction may be mediated by KIAA0753/OFIP. Interacts with TBC1D31; regulates OFD1 activity in cilium assembly. Phosphorylated. Phosphorylation at Ser-737, by the cAMP-dependent protein kinase PKA, triggers ubiquitination and proteasomal degradation of OFD1. Also increases its interaction with TBC1D31 and regulates its function in ciliogenesis. Post-translationally, ubiquitinated by PJA2, upon phosphorylation at Ser-737 by PKA, leads to the proteasomal degradation of OFD1.

The protein resides in the cytoplasm. It localises to the cytoskeleton. The protein localises to the microtubule organizing center. Its subcellular location is the centrosome. It is found in the centriole. The protein resides in the centriolar satellite. It localises to the cilium basal body. The protein localises to the nucleus. In terms of biological role, component of the centrioles controlling mother and daughter centrioles length. Recruits to the centriole IFT88 and centriole distal appendage-specific proteins including CEP164. Involved in the biogenesis of the cilium, a centriole-associated function. The cilium is a cell surface projection found in many vertebrate cells required to transduce signals important for development and tissue homeostasis. Plays an important role in development by regulating Wnt signaling and the specification of the left-right axis. Only OFD1 localized at the centriolar satellites is removed by autophagy, which is an important step in the ciliogenesis regulation. This chain is Centriole and centriolar satellite protein OFD1 (Ofd1), found in Mus musculus (Mouse).